Consider the following 126-residue polypeptide: Lymphocyte antigen 6E (126 aa).

The N-terminal stretch at 1–20 (MKAFLFAVLAAVLCVERAHT) is a signal peptide. The UPAR/Ly6 domain maps to 21-98 (LICFSCSDAS…CCDSFLCNIS (78 aa)). 5 disulfide bridges follow: Cys23–Cys48, Cys26–Cys35, Cys41–Cys69, Cys73–Cys89, and Cys90–Cys95. The N-linked (GlcNAc...) asparagine glycan is linked to Asn96. Ser98 is lipidated: GPI-anchor amidated serine. A propeptide spans 99–126 (GSSSVKASYAVLALGILVSFVYVLRARE) (removed in mature form).

In terms of tissue distribution, expressed by thymic blast cells.

It is found in the cell membrane. This is Lymphocyte antigen 6E (LY6E) from Gallus gallus (Chicken).